We begin with the raw amino-acid sequence, 122 residues long: Large ribosomal subunit protein uL14 (122 aa).

Belongs to the universal ribosomal protein uL14 family. As to quaternary structure, part of the 50S ribosomal subunit. Forms a cluster with proteins L3 and L19. In the 70S ribosome, L14 and L19 interact and together make contacts with the 16S rRNA in bridges B5 and B8.

Its function is as follows. Binds to 23S rRNA. Forms part of two intersubunit bridges in the 70S ribosome. The sequence is that of Large ribosomal subunit protein uL14 from Phytoplasma mali (strain AT).